A 341-amino-acid polypeptide reads, in one-letter code: Biotin synthase (341 aa).

Positions 56–285 constitute a Radical SAM core domain; the sequence is ADIQRAALLS…KARVRLSAGR (230 aa). 3 residues coordinate [4Fe-4S] cluster: C71, C75, and C78. [2Fe-2S] cluster contacts are provided by C116, C148, C208, and R280.

Belongs to the radical SAM superfamily. Biotin synthase family. Homodimer. It depends on [4Fe-4S] cluster as a cofactor. [2Fe-2S] cluster is required as a cofactor.

It catalyses the reaction (4R,5S)-dethiobiotin + (sulfur carrier)-SH + 2 reduced [2Fe-2S]-[ferredoxin] + 2 S-adenosyl-L-methionine = (sulfur carrier)-H + biotin + 2 5'-deoxyadenosine + 2 L-methionine + 2 oxidized [2Fe-2S]-[ferredoxin]. It functions in the pathway cofactor biosynthesis; biotin biosynthesis; biotin from 7,8-diaminononanoate: step 2/2. Its function is as follows. Catalyzes the conversion of dethiobiotin (DTB) to biotin by the insertion of a sulfur atom into dethiobiotin via a radical-based mechanism. The sequence is that of Biotin synthase from Methylorubrum populi (strain ATCC BAA-705 / NCIMB 13946 / BJ001) (Methylobacterium populi).